Consider the following 1427-residue polypeptide: Lysophospholipase NTE1 (1427 aa).

At 1-60 the chain is on the cytoplasmic side; the sequence is MDSLHVSSTSVLVDVVEAVETATSLVVDTAEAVATEQATPTAVISNALARSAYAAHTSLS. A helical membrane pass occupies residues 61 to 81; sequence YLAWAFGLWFLRLIGWVCYGI. Residues 82–96 are Lumenal-facing; the sequence is PTYVLGLLGRTINIS. A helical transmembrane segment spans residues 97–117; the sequence is LQFSSLLLILIALVTVVVAVV. Residues 118–1427 lie on the Cytoplasmic side of the membrane; the sequence is RYKYLTVYSR…KRTIARRNSI (1310 aa). The span at 281–296 shows a compositional bias: polar residues; sequence PMTSASDVPNMSLSSD. A disordered region spans residues 281–315; that stretch reads PMTSASDVPNMSLSSDGSDDLQKGEPQFGEPRLSE. A nucleoside 3',5'-cyclic phosphate is bound by residues 615-735 and 731-870; these read LMAA…LTKV and SLTK…VASR. Residues 787–807 form a disordered region; that stretch reads GIVGGESGDAKDGKSHRKNLT. Residues 1124 to 1288 enclose the PNPLA domain; the sequence is LVLGGGGARG…VDNLPVSEMK (165 aa). Residues 1128–1133 carry the GXGXXG motif; the sequence is GGGARG. A GXSXG motif is present at residues 1155–1159; that stretch reads GTSIG. Catalysis depends on Ser1157, which acts as the Nucleophile. Residue Asp1275 is the Proton acceptor of the active site. The DGA/G signature appears at 1275-1277; that stretch reads DGG.

It belongs to the NTE family.

It is found in the endoplasmic reticulum membrane. The catalysed reaction is a 1-acyl-sn-glycero-3-phosphocholine + H2O = sn-glycerol 3-phosphocholine + a fatty acid + H(+). Its activity is regulated as follows. Inhibited by organophosphorus esters. Functionally, intracellular phospholipase B that catalyzes the double deacylation of phosphatidylcholine (PC) to glycerophosphocholine (GroPCho). Plays an important role in membrane lipid homeostasis. Responsible for the rapid PC turnover in response to inositol, elevated temperatures, or when choline is present in the growth medium. This Yarrowia lipolytica (strain CLIB 122 / E 150) (Yeast) protein is Lysophospholipase NTE1 (NTE1).